The sequence spans 203 residues: MSAIERITKAAHLIDMNDIIREGNPTLRAIAEKVTFPLSDQEIILGEKMMQFLKHSQDPVMAEKMGLRGGVGLAAPQLDISKRIIAVLVPNIVEEGETPQEAYDLEAIMYNPKIVSHSVQDAALGEGEXCLSVDRNVPGYVVRHARVTVDYFDKDGEKHRIKLKGYNSIVVQHEIDHINGIMFYDRINEKDPFAVKDGLLILE.

Residues C130 and H173 each coordinate Fe cation. E174 is a catalytic residue. A Fe cation-binding site is contributed by H177.

This sequence belongs to the polypeptide deformylase family. Fe(2+) serves as cofactor.

It carries out the reaction N-terminal N-formyl-L-methionyl-[peptide] + H2O = N-terminal L-methionyl-[peptide] + formate. Its function is as follows. Removes the formyl group from the N-terminal Met of newly synthesized proteins. Requires at least a dipeptide for an efficient rate of reaction. N-terminal L-methionine is a prerequisite for activity but the enzyme has broad specificity at other positions. This Streptococcus pneumoniae serotype 19F (strain G54) protein is Peptide deformylase.